Reading from the N-terminus, the 388-residue chain is MKFVDEANIRVEAGDGGSGCVSFRREKYVPDGGPDGGDGGDGGSVYLQANENLNTLIDYRFTRFHMAERGTNGRGRDCTGHGGSDLVLQVPVGTRAIDQETEESLGDLTVNGQKLLVAKGGFHGLGNTRFKSSTNRAPRQKTLGTPGEVRSIKLELLLLADVGLLGMPNAGKSTFIRSVSRATPKVADYPFTTLVPNLGVVNPRPGQSFVIADIPGLIEGAAEGAGLGIRFLKHLERCRMLLHIIDIEPIDGVDPVYSARAIVGELEKYSPKLAAKPRWLVFNKTDLLLDEEIQAKIDRIVKELDWQGDVYTMSAYNRTGTEELSIKMLDYIRSLPAIVEEITADADVEFKWDNYHSAEDENANENYDDDFDEDFDDDDYDVEVIYQR.

The region spanning 1–159 (MKFVDEANIR…RSIKLELLLL (159 aa)) is the Obg domain. The OBG-type G domain occupies 160-333 (ADVGLLGMPN…LSIKMLDYIR (174 aa)). GTP is bound by residues 166-173 (GMPNAGKS), 191-195 (FTTLV), 213-216 (DIPG), 283-286 (NKTD), and 314-316 (SAY). Ser-173 and Thr-193 together coordinate Mg(2+).

It belongs to the TRAFAC class OBG-HflX-like GTPase superfamily. OBG GTPase family. Monomer. It depends on Mg(2+) as a cofactor.

It is found in the cytoplasm. Functionally, an essential GTPase which binds GTP, GDP and possibly (p)ppGpp with moderate affinity, with high nucleotide exchange rates and a fairly low GTP hydrolysis rate. Plays a role in control of the cell cycle, stress response, ribosome biogenesis and in those bacteria that undergo differentiation, in morphogenesis control. This is GTPase Obg from Shewanella frigidimarina (strain NCIMB 400).